Consider the following 699-residue polypeptide: (E2-independent) E3 ubiquitin-conjugating enzyme FATS (699 aa).

Residues 48–116 (MISSIVISQM…LGIPAPSDER (69 aa)) form a required for interaction with p53/TP53 region. Disordered regions lie at residues 107–134 (LGIPAPSDERGPEAELPPKEERPCGGPR), 443–473 (KPTRHFLPIGDSSPSDDCLSRDLSEPTERRH), and 528–569 (KSED…PARS). Composition is skewed to basic and acidic residues over residues 113–129 (SDERGPEAELPPKEERP) and 460–473 (CLSRDLSEPTERRH). The segment at 116–224 (RGPEAELPPK…GLCERRKYWV (109 aa)) is required for interaction with HDAC1. Residues 534–545 (TPEPSPAAPSPA) show a composition bias toward pro residues. Residues 571–699 (TLQEALEVRK…LDQLLQRNAV (129 aa)) are ALMS motif.

As to quaternary structure, interacts with HDAC1; the interaction prevents binding of HDAC1 to CDKN1A/p21 and facilitates the acetylation and stabilization of CDKN1A/p21. Interacts with p53/TP53; the interaction inhibits binding of p53/TP53 and MDM2.

The protein localises to the cytoplasm. Its subcellular location is the cytoskeleton. It localises to the microtubule organizing center. It is found in the centrosome. Functionally, tumor suppressor that is required to sustain G2/M checkpoint after DNA damage. Acts as a p53/TP53 activator by inhibiting MDM2 binding to p53/TP53 and stimulating non-proteolytic polyubiquitination of p53/TP53. Exhibits ubiquitin ligase (E3) activity and assemble ubiquitin polymers through 'Lys-11'- (K11-), 'Lys-29'- (K29-) and 'Lys-63'- (K63)-linkages, independently of the ubiquitin-conjugating enzyme (E2). Promotes p53/TP53-dependent transcription of CDKN1A/p21, leading to robust checkpoint response. Mediates CDKN1A/p21 protein stability in a ubiquitin-independent manner. Interacts with HDAC1 and prevents binding of HDAC1 to CDKN1A/p21 and facilitates the acetylation and stabilization of CDKN1A/p21. May have a role in the assembly of primary cilia. This chain is (E2-independent) E3 ubiquitin-conjugating enzyme FATS, found in Homo sapiens (Human).